The sequence spans 95 residues: DNA-directed RNA polymerase subunit Rpo6 (95 aa).

This sequence belongs to the archaeal Rpo6/eukaryotic RPB6 RNA polymerase subunit family. As to quaternary structure, part of the 13-subunit RNA polymerase complex.

It localises to the cytoplasm. It catalyses the reaction RNA(n) + a ribonucleoside 5'-triphosphate = RNA(n+1) + diphosphate. DNA-dependent RNA polymerase (RNAP) catalyzes the transcription of DNA into RNA using the four ribonucleoside triphosphates as substrates. In Saccharolobus solfataricus (strain ATCC 35092 / DSM 1617 / JCM 11322 / P2) (Sulfolobus solfataricus), this protein is DNA-directed RNA polymerase subunit Rpo6.